Consider the following 250-residue polypeptide: Capsid protein (250 aa).

Residues 1–31 (MPKRDAPWLMAGTSKVSRSGNYSPSGGMGSK) are disordered. The short motif at 3–19 (KRDAPWLMAGTSKVSRS) is the Bipartite nuclear localization signal element. Residues 14–31 (SKVSRSGNYSPSGGMGSK) show a composition bias toward polar residues. The Nuclear localization signal motif lies at 34 to 48 (KANAWVNRPMYRKPR). The segment at 53 to 70 (YKSPDVPKGCEGPCKVQS) is a zinc-finger region. The Nuclear export signal motif lies at 95–116 (ITHRVGKRFCVKSVYILGKIWM). A Bipartite nuclear localization signal motif is present at residues 194 to 241 (RRFWKVNNHVVYNHQEAGKYENHTENALLLYMACTHASNPVYATLKIR).

It belongs to the geminiviridae capsid protein family. Homomultimer. Binds to single-stranded and double-stranded viral DNA. Interacts (via nuclear localization signals) with host importin alpha-1a.

The protein resides in the virion. Its subcellular location is the host nucleus. In terms of biological role, encapsidates the viral DNA into characteristic twinned ('geminate') particles. Binds the genomic viral ssDNA and shuttles it into and out of the cell nucleus. The CP of bipartite geminiviruses is not required for cell-to-cell or systemic movement. The protein is Capsid protein of Bean golden yellow mosaic virus (isolate Puerto Rico) (BGYMV).